The sequence spans 156 residues: Small ribosomal subunit protein uS7 (156 aa).

This sequence belongs to the universal ribosomal protein uS7 family. As to quaternary structure, part of the 30S ribosomal subunit. Contacts proteins S9 and S11.

Its function is as follows. One of the primary rRNA binding proteins, it binds directly to 16S rRNA where it nucleates assembly of the head domain of the 30S subunit. Is located at the subunit interface close to the decoding center, probably blocks exit of the E-site tRNA. In Rhodopseudomonas palustris (strain BisB18), this protein is Small ribosomal subunit protein uS7.